The following is a 376-amino-acid chain: CYP enzymes assisting alcohol dehydrogenase (376 aa).

Zn(2+)-binding residues include Cys-43, Thr-45, His-64, Cys-94, Cys-97, Cys-100, Cys-108, and Cys-173. Thr-45 serves as a coordination point for NAD(+). Residues Thr-45 and His-64 each contribute to the substrate site. Residues 199–204 (GLGAVG), Asp-223, Lys-228, 294–296 (LGA), Phe-320, and Lys-371 each bind NAD(+).

Belongs to the zinc-containing alcohol dehydrogenase family. Class-III subfamily. As to quaternary structure, homodimer. Zn(2+) is required as a cofactor.

The protein operates within alkaloid biosynthesis. Functionally, may be a positive catalyzer of strictosidine production by assisting secologanin biosynthesis, thus being involved in monoterpene indole alkaloids accumulation. The protein is CYP enzymes assisting alcohol dehydrogenase of Catharanthus roseus (Madagascar periwinkle).